The primary structure comprises 936 residues: Coiled-coil domain-containing protein 191 (936 aa).

Coiled-coil stretches lie at residues 189–270 and 364–440; these read RLTM…VKAA and RDYT…LQAA. The tract at residues 495–541 is disordered; that stretch reads LGRTTTGNLQGSLQNVSLSAPGNKQHKTLGAEPSQQPGSNETLRTTS. Composition is skewed to polar residues over residues 497–516 and 527–541; these read RTTT…SAPG and PSQQ…RTTS. Residues 554 to 592 are a coiled coil; it reads NRHVFQQQLIEKQKKKLQEQQKTILELKKNLQLAEAQWA. Disordered stretches follow at residues 607-656 and 691-714; these read LSKP…TPHP and KAQE…RKRE. The stretch at 662-739 forms a coiled coil; that stretch reads EERAIQRAEC…IKRNQQLEAI (78 aa).

The sequence is that of Coiled-coil domain-containing protein 191 (CCDC191) from Homo sapiens (Human).